The following is a 688-amino-acid chain: Small ribosomal subunit protein mS39 (688 aa).

Residues 1–37 constitute a mitochondrion transit peptide; that stretch reads MASVASARWLRVSCGLCVPLTARRAGPCGRTPSSRFY. At lysine 126 the chain carries N6-acetyllysine. 10 PPR repeats span residues 149 to 183, 184 to 219, 258 to 292, 293 to 333, 334 to 370, 371 to 412, 415 to 449, 457 to 491, 492 to 526, and 575 to 609; these read IEEI…GTTV, SLET…EELE, NAHS…RLRA, DVHT…NVKP, NLQT…GIEP, SLAT…SPKD, DDMF…DNRK, RNFY…VFFP, HSQT…GHTF, and PANS…NKIP. The segment at 667-688 is disordered; that stretch reads GDLTALTSDSESDSDSDTSKDK.

This sequence belongs to the mitochondrion-specific ribosomal protein mS39 family. Component of the mitochondrial ribosome small subunit (28S) which comprises a 12S rRNA and about 30 distinct proteins. Associated with the 12S mitochondrial rRNA (12S mt-rRNA).

The protein localises to the mitochondrion. Mitochondrial RNA-binding protein that has a role in mitochondrial translation. This is Small ribosomal subunit protein mS39 (PTCD3) from Bos taurus (Bovine).